The following is a 748-amino-acid chain: MTISRPEQEVKILVEKDPIKTSFEKWAKPGHFSRNLSKGPNTTTWIWNLHADAHDFDSHTSDLEDISRKVFSAHFGQLAVIFIWISGMYFHGARFSNYEAWLSDPIHIKPSAQVVWPIVGQEILNGDVGGGFQGIQITSGFFQIWRASGITSELQLYTTAIGGLVMAGLMLFAGWFHYHKAAPKLAWFQDVESMLNHHLAGLLGLGSLAWAGHQIHVSMPINELLDAGVDPKEIPLPHEFILNRDLIAELYPSFKSGLIPFFTLNWSAYSDFLTFRGGLNPVTGGLWLSDTAHHHLAIAVLFLIAGHMYRTNWGIGHNMKDILEAHKGPFTGEGHKGLYEIFTTSWHAQLSLNLAMLGSLTIIVAHHMYSMPPYPYLAIDYGTQLSLFTHHMWIGGFCIVGAAAHAAIFMVRDYDSANQYNNLLDRVIRHRDAIISHLNWACIFLGFHSFGLYIHNDTMRALGRPQDMFSDTAIQLQPIFAQWIQNTHVLAPSLTAPQATSATSPVWGEGLITVGGKVAMMPIPLGTADFLVHHIHAFTIHVTVLILLKGVLFSRSSRLIPDKANLGFRFPCDGPGRGGTCQVSAWDHIFLGLFWMYNSLSIAIFHFSWKMQSDVWGNVTPQGISHITGGNFAQSSITINGWLRDFLWAQASQVIQSYGSPLSAYGLIFLGAHFVWAFSLMFLFSGRGYWQELIESIVWAHNKLKVAPAIQPRALSIVQGRAVGVAHYLLGGIATTWAFFLARIISVA.

The next 8 helical transmembrane spans lie at 70–93 (VFSAHFGQLAVIFIWISGMYFHGA), 156–179 (LYTTAIGGLVMAGLMLFAGWFHYH), 195–219 (LNHHLAGLLGLGSLAWAGHQIHVSM), 291–309 (TAHHHLAIAVLFLIAGHMY), 346–369 (WHAQLSLNLAMLGSLTIIVAHHMY), 385–411 (LSLFTHHMWIGGFCIVGAAAHAAIFMV), 433–455 (AIISHLNWACIFLGFHSFGLYIH), and 530–548 (FLVHHIHAFTIHVTVLILL). Residues Cys572 and Cys581 each coordinate [4Fe-4S] cluster. Helical transmembrane passes span 588–609 (HIFLGLFWMYNSLSIAIFHFSW) and 662–684 (LSAYGLIFLGAHFVWAFSLMFLF). His673 contributes to the chlorophyll a' binding site. Positions 681 and 689 each coordinate chlorophyll a. Position 690 (Trp690) interacts with phylloquinone. Residues 722–742 (AVGVAHYLLGGIATTWAFFLA) form a helical membrane-spanning segment.

It belongs to the PsaA/PsaB family. The PsaA/B heterodimer binds the P700 chlorophyll special pair and subsequent electron acceptors. PSI consists of a core antenna complex that captures photons, and an electron transfer chain that converts photonic excitation into a charge separation. The eukaryotic PSI reaction center is composed of at least 11 subunits. P700 is a chlorophyll a/chlorophyll a' dimer, A0 is one or more chlorophyll a, A1 is one or both phylloquinones and FX is a shared 4Fe-4S iron-sulfur center. serves as cofactor.

The protein resides in the plastid. It is found in the chloroplast thylakoid membrane. It carries out the reaction reduced [plastocyanin] + hnu + oxidized [2Fe-2S]-[ferredoxin] = oxidized [plastocyanin] + reduced [2Fe-2S]-[ferredoxin]. In terms of biological role, psaA and PsaB bind P700, the primary electron donor of photosystem I (PSI), as well as the electron acceptors A0, A1 and FX. PSI is a plastocyanin-ferredoxin oxidoreductase, converting photonic excitation into a charge separation, which transfers an electron from the donor P700 chlorophyll pair to the spectroscopically characterized acceptors A0, A1, FX, FA and FB in turn. Oxidized P700 is reduced on the lumenal side of the thylakoid membrane by plastocyanin. This is Photosystem I P700 chlorophyll a apoprotein A1 from Chara vulgaris (Common stonewort).